Here is a 330-residue protein sequence, read N- to C-terminus: Probable WRKY transcription factor 39 (330 aa).

The WRKY DNA-binding region spans lysine 256 to isoleucine 322.

The protein localises to the nucleus. Transcription factor. Interacts specifically with the W box (5'-(T)TGAC[CT]-3'), a frequently occurring elicitor-responsive cis-acting element. In Arabidopsis thaliana (Mouse-ear cress), this protein is Probable WRKY transcription factor 39 (WRKY39).